Reading from the N-terminus, the 478-residue chain is Isoeugenol monooxygenase (478 aa).

Residues His167, His218, His282, and His471 each contribute to the Fe cation site.

This sequence belongs to the carotenoid oxygenase family. Requires Fe(2+) as cofactor.

It carries out the reaction (E)-isoeugenol + O2 = vanillin + acetaldehyde. Its activity is regulated as follows. Inhibited by Co(2+), Ni(2+) and Zn(2+), which may inhibit enzyme activity by replacing iron in the catalytic residues. Inhibited by incubation with high concentrations of the iron chelators 1,10-phenanthroline and Tiron. However, iron is not completely removed by the chelators, suggesting that iron is tightly bound to the enzyme. Its function is as follows. Involved in isoeugenol degradation. Catalyzes the oxidative cleavage of the side chain double-bond of isoeugenol to form vanillin and acetaldehyde. In Pseudomonas nitroreducens, this protein is Isoeugenol monooxygenase.